The primary structure comprises 97 residues: Defensin-like protein 301 (97 aa).

Residues 1-24 (MEKVTSIFFVLLLISSCLILRSQG) form the signal peptide. Intrachain disulfides connect Cys-28–Cys-47, Cys-34–Cys-53, Cys-39–Cys-55, Cys-65–Cys-84, Cys-71–Cys-92, and Cys-76–Cys-94.

This sequence belongs to the DEFL family.

The protein resides in the secreted. The protein is Defensin-like protein 301 of Arabidopsis thaliana (Mouse-ear cress).